A 314-amino-acid polypeptide reads, in one-letter code: Methionyl-tRNA formyltransferase (314 aa).

110-113 (SLLP) contributes to the (6S)-5,6,7,8-tetrahydrofolate binding site.

It belongs to the Fmt family.

It carries out the reaction L-methionyl-tRNA(fMet) + (6R)-10-formyltetrahydrofolate = N-formyl-L-methionyl-tRNA(fMet) + (6S)-5,6,7,8-tetrahydrofolate + H(+). Attaches a formyl group to the free amino group of methionyl-tRNA(fMet). The formyl group appears to play a dual role in the initiator identity of N-formylmethionyl-tRNA by promoting its recognition by IF2 and preventing the misappropriation of this tRNA by the elongation apparatus. This Bacillus anthracis (strain A0248) protein is Methionyl-tRNA formyltransferase.